The sequence spans 656 residues: Receptor-type tyrosine-protein phosphatase R (656 aa).

The first 23 residues, M1–S23, serve as a signal peptide directing secretion. S23 carries an O-linked (Xyl...) (chondroitin sulfate) serine glycan. At N25 to E225 the chain is on the extracellular side. N128 carries an N-linked (GlcNAc...) asparagine glycan. The chain crosses the membrane as a helical span at residues G226–Y248. The Cytoplasmic portion of the chain corresponds to R249 to Q656. Residue S271 is modified to Phosphoserine. S338 is subject to Phosphoserine; by PKA. The 255-residue stretch at L392–F646 folds into the Tyrosine-protein phosphatase domain. Residues D553, C587–R593, and Q631 each bind substrate. C587 (phosphocysteine intermediate) is an active-site residue.

Belongs to the protein-tyrosine phosphatase family. Receptor class 7 subfamily. In terms of assembly, interacts with MAPKs. In terms of tissue distribution, widely expressed in the brain, most abundant in cerebellum, midbrain, cerebral cortex and hippocampus. Also expressed in heart and skeletal muscle.

The protein localises to the cytoplasm. Its subcellular location is the cell membrane. The enzyme catalyses O-phospho-L-tyrosyl-[protein] + H2O = L-tyrosyl-[protein] + phosphate. Sequesters mitogen-activated protein kinases (MAPKs) such as MAPK1, MAPK3 and MAPK14 in the cytoplasm in an inactive form. The MAPKs bind to a dephosphorylated kinase interacting motif, phosphorylation of which by the protein kinase A complex releases the MAPKs for activation and translocation into the nucleus. This Rattus norvegicus (Rat) protein is Receptor-type tyrosine-protein phosphatase R (Ptprr).